Reading from the N-terminus, the 412-residue chain is Histone-lysine N-methyltransferase SUV39H1 (412 aa).

The segment at 1–89 (MAENLKGCSV…LKCIRVLKQF (89 aa)) is interaction with SIRT1. One can recognise a Chromo domain in the interval 43 to 101 (FEVEYLCDYKKIREQEYYLVKWRGYPDSENTWEPRQNLKCIRVLKQFHKDLERELVRRH). One can recognise a Pre-SET domain in the interval 179–240 (VGCECQDCLL…DCPNRVVQKG (62 aa)). Zn(2+) is bound by residues cysteine 181, cysteine 183, cysteine 186, cysteine 194, cysteine 195, cysteine 222, cysteine 226, cysteine 228, and cysteine 232. An SET domain is found at 243-366 (YDLCIFRTND…AGEELTFDYN (124 aa)). Residue 254–256 (RGW) coordinates S-adenosyl-L-methionine. The tract at residues 255–377 (GWGVRTLEKI…QVDPVDMEST (123 aa)) is mediates interaction with MECOM. Lysine 266 bears the N6-acetyllysine mark. S-adenosyl-L-methionine is bound by residues tyrosine 297 and 323 to 324 (NH). Cysteine 326 is a binding site for Zn(2+). A Phosphoserine modification is found at serine 391. Residues 396 to 412 (VRIECKCGTTACRKYLF) form the Post-SET domain. 3 residues coordinate Zn(2+): cysteine 400, cysteine 402, and cysteine 407.

Belongs to the class V-like SAM-binding methyltransferase superfamily. Histone-lysine methyltransferase family. Suvar3-9 subfamily. In terms of assembly, interacts with CCAR2 and GFI1B. Component of the eNoSC complex, composed of SIRT1, SUV39H1 and RRP8. Interacts with H3 and H4 histones. Interacts with DNMT3B, CBX1, CBX4, MBD1, RUNX1, RUNX3, MYOD1, SMAD5 and RB1. Interacts with SBF1 through the SET domain. Interacts with HDAC1 and HDAC2 through the N-terminus and associates with the core histone deacetylase complex composed of HDAC1, HDAC2, RBBP4 and RBBP7. Interacts (via SET domain) with MECOM; enhances MECOM transcriptional repression activity. Interacts with LMNA; the interaction increases stability of SUV39H1. The large PER complex involved in the histone methylation is composed of at least PER2, CBX3, TRIM28, SUV39H1 and/or SUV39H2; CBX3 mediates the formation of the complex. In terms of processing, phosphorylated on serine residues, and to a lesser degree, on threonine residues. Post-translationally, acetylated at Lys-266, leading to inhibition of enzyme activity. SIRT1-mediated deacetylation relieves this inhibition. Ubiquitinated by the DCX(DCAF13) E3 ubiquitin ligase complex, leading to its degradation. As to expression, widely expressed.

It is found in the nucleus. Its subcellular location is the nucleus lamina. The protein resides in the nucleoplasm. It localises to the chromosome. The protein localises to the centromere. The catalysed reaction is L-lysyl(9)-[histone H3] + 3 S-adenosyl-L-methionine = N(6),N(6),N(6)-trimethyl-L-lysyl(9)-[histone H3] + 3 S-adenosyl-L-homocysteine + 3 H(+). With respect to regulation, negatively regulated by CCAR2. In terms of biological role, histone methyltransferase that specifically trimethylates 'Lys-9' of histone H3 using monomethylated H3 'Lys-9' as substrate. H3 'Lys-9' trimethylation represents a specific tag for epigenetic transcriptional repression by recruiting HP1 (CBX1, CBX3 and/or CBX5) proteins to methylated histones. Mainly functions in heterochromatin regions, thereby playing a central role in the establishment of constitutive heterochromatin at pericentric and telomere regions. H3 'Lys-9' trimethylation is also required to direct DNA methylation at pericentric repeats. SUV39H1 is targeted to histone H3 via its interaction with RB1 and is involved in many processes, such as repression of MYOD1-stimulated differentiation, regulation of the control switch for exiting the cell cycle and entering differentiation, repression by the PML-RARA fusion protein, BMP-induced repression, repression of switch recombination to IgA and regulation of telomere length. Component of the eNoSC (energy-dependent nucleolar silencing) complex, a complex that mediates silencing of rDNA in response to intracellular energy status and acts by recruiting histone-modifying enzymes. The eNoSC complex is able to sense the energy status of cell: upon glucose starvation, elevation of NAD(+)/NADP(+) ratio activates SIRT1, leading to histone H3 deacetylation followed by dimethylation of H3 at 'Lys-9' (H3K9me2) by SUV39H1 and the formation of silent chromatin in the rDNA locus. Recruited by the PER complex to the E-box elements of the circadian target genes such as PER2 itself or PER1, contributes to the conversion of local chromatin to a heterochromatin-like repressive state through H3 'Lys-9' trimethylation. The sequence is that of Histone-lysine N-methyltransferase SUV39H1 (Suv39h1) from Mus musculus (Mouse).